Here is a 244-residue protein sequence, read N- to C-terminus: Phosphoadenosine 5'-phosphosulfate reductase (244 aa).

The active-site Nucleophile; cysteine thiosulfonate intermediate is the C239.

It belongs to the PAPS reductase family. CysH subfamily.

Its subcellular location is the cytoplasm. It catalyses the reaction [thioredoxin]-disulfide + sulfite + adenosine 3',5'-bisphosphate + 2 H(+) = [thioredoxin]-dithiol + 3'-phosphoadenylyl sulfate. Its pathway is sulfur metabolism; hydrogen sulfide biosynthesis; sulfite from sulfate: step 3/3. Its function is as follows. Catalyzes the formation of sulfite from phosphoadenosine 5'-phosphosulfate (PAPS) using thioredoxin as an electron donor. This Pectobacterium atrosepticum (strain SCRI 1043 / ATCC BAA-672) (Erwinia carotovora subsp. atroseptica) protein is Phosphoadenosine 5'-phosphosulfate reductase.